A 310-amino-acid polypeptide reads, in one-letter code: Lipoyl synthase (310 aa).

Residues C45, C50, C56, C71, C75, C78, and S285 each coordinate [4Fe-4S] cluster. Residues 57–274 (WTKKHATVMI…GSIARAKGFL (218 aa)) enclose the Radical SAM core domain.

The protein belongs to the radical SAM superfamily. Lipoyl synthase family. It depends on [4Fe-4S] cluster as a cofactor.

Its subcellular location is the cytoplasm. It catalyses the reaction [[Fe-S] cluster scaffold protein carrying a second [4Fe-4S](2+) cluster] + N(6)-octanoyl-L-lysyl-[protein] + 2 oxidized [2Fe-2S]-[ferredoxin] + 2 S-adenosyl-L-methionine + 4 H(+) = [[Fe-S] cluster scaffold protein] + N(6)-[(R)-dihydrolipoyl]-L-lysyl-[protein] + 4 Fe(3+) + 2 hydrogen sulfide + 2 5'-deoxyadenosine + 2 L-methionine + 2 reduced [2Fe-2S]-[ferredoxin]. It functions in the pathway protein modification; protein lipoylation via endogenous pathway; protein N(6)-(lipoyl)lysine from octanoyl-[acyl-carrier-protein]: step 2/2. Its function is as follows. Catalyzes the radical-mediated insertion of two sulfur atoms into the C-6 and C-8 positions of the octanoyl moiety bound to the lipoyl domains of lipoate-dependent enzymes, thereby converting the octanoylated domains into lipoylated derivatives. The polypeptide is Lipoyl synthase (Novosphingobium aromaticivorans (strain ATCC 700278 / DSM 12444 / CCUG 56034 / CIP 105152 / NBRC 16084 / F199)).